A 104-amino-acid polypeptide reads, in one-letter code: Snakin-2 (104 aa).

The N-terminal stretch at 1-23 is a signal peptide; that stretch reads MAISKALFASLLLSLLLLEQVQS. The propeptide at 24 to 38 is removed in mature form; it reads IQTDQVTSNAISEAA.

Belongs to the GASA family. In terms of processing, six disulfide bonds may be present. In terms of tissue distribution, expressed in tubers, stems, flowers, shoot apex and leaves, but not in roots or stolons.

It localises to the secreted. The protein localises to the cell wall. In terms of biological role, has an antimicrobial activity. Causes a rapid aggregation of both Gram-positive and Gram-negative bacteria, but the antimicrobial activity is not correlated with the capacity to aggregate bacteria. This Solanum tuberosum (Potato) protein is Snakin-2 (SN2).